We begin with the raw amino-acid sequence, 326 residues long: Beta-ketoacyl-[acyl-carrier-protein] synthase III (326 aa).

Active-site residues include C112 and H251. Positions 252–256 are ACP-binding; it reads QANSR. N281 is an active-site residue.

This sequence belongs to the thiolase-like superfamily. FabH family. As to quaternary structure, homodimer.

The protein resides in the cytoplasm. It catalyses the reaction malonyl-[ACP] + acetyl-CoA + H(+) = 3-oxobutanoyl-[ACP] + CO2 + CoA. Its pathway is lipid metabolism; fatty acid biosynthesis. Its function is as follows. Catalyzes the condensation reaction of fatty acid synthesis by the addition to an acyl acceptor of two carbons from malonyl-ACP. Catalyzes the first condensation reaction which initiates fatty acid synthesis and may therefore play a role in governing the total rate of fatty acid production. Possesses both acetoacetyl-ACP synthase and acetyl transacylase activities. Its substrate specificity determines the biosynthesis of branched-chain and/or straight-chain of fatty acids. This chain is Beta-ketoacyl-[acyl-carrier-protein] synthase III, found in Clostridium botulinum (strain ATCC 19397 / Type A).